We begin with the raw amino-acid sequence, 477 residues long: UDP-N-acetylmuramate--L-alanine ligase (477 aa).

Gly-112–Thr-118 contributes to the ATP binding site.

Belongs to the MurCDEF family.

It is found in the cytoplasm. The enzyme catalyses UDP-N-acetyl-alpha-D-muramate + L-alanine + ATP = UDP-N-acetyl-alpha-D-muramoyl-L-alanine + ADP + phosphate + H(+). It functions in the pathway cell wall biogenesis; peptidoglycan biosynthesis. In terms of biological role, cell wall formation. This chain is UDP-N-acetylmuramate--L-alanine ligase, found in Verminephrobacter eiseniae (strain EF01-2).